A 347-amino-acid chain; its full sequence is tRNA N6-adenosine threonylcarbamoyltransferase (347 aa).

Residues His111 and His115 each contribute to the Fe cation site. Substrate-binding positions include 134 to 138, Asp167, Gly180, and Asn277; that span reads LVSGG. Asp305 contributes to the Fe cation binding site.

It belongs to the KAE1 / TsaD family. It depends on Fe(2+) as a cofactor.

Its subcellular location is the cytoplasm. The catalysed reaction is L-threonylcarbamoyladenylate + adenosine(37) in tRNA = N(6)-L-threonylcarbamoyladenosine(37) in tRNA + AMP + H(+). Functionally, required for the formation of a threonylcarbamoyl group on adenosine at position 37 (t(6)A37) in tRNAs that read codons beginning with adenine. Is involved in the transfer of the threonylcarbamoyl moiety of threonylcarbamoyl-AMP (TC-AMP) to the N6 group of A37, together with TsaE and TsaB. TsaD likely plays a direct catalytic role in this reaction. This is tRNA N6-adenosine threonylcarbamoyltransferase from Ralstonia pickettii (strain 12J).